Reading from the N-terminus, the 463-residue chain is Cysteine--tRNA ligase (463 aa).

Cysteine 29 is a binding site for Zn(2+). Residues 31-41 carry the 'HIGH' region motif; it reads ATPQTQPHIGH. Zn(2+) contacts are provided by cysteine 212, histidine 237, and glutamate 241. Positions 268–272 match the 'KMSKS' region motif; the sequence is KMSKS. Lysine 271 contacts ATP.

The protein belongs to the class-I aminoacyl-tRNA synthetase family. In terms of assembly, monomer. It depends on Zn(2+) as a cofactor.

The protein resides in the cytoplasm. The enzyme catalyses tRNA(Cys) + L-cysteine + ATP = L-cysteinyl-tRNA(Cys) + AMP + diphosphate. This chain is Cysteine--tRNA ligase, found in Corynebacterium diphtheriae (strain ATCC 700971 / NCTC 13129 / Biotype gravis).